Consider the following 261-residue polypeptide: HTH-type transcriptional repressor CsqR (261 aa).

The HTH deoR-type domain maps to Gly-8–Arg-63. Residues Met-25–Asp-44 constitute a DNA-binding region (H-T-H motif).

In terms of assembly, monomer in the absence of DNA. Exhibits a high level of cooperativity once it is bound to its target DNA.

Inactivated in the presence of the effectors sulfoquinovose and sulfoquinovosyl glycerol, leading to the de-repression of the target genes. Involved in the regulation of the sulfoquinovose operon. Represses the expression of the yihUTS operon and of the yihV and csqR genes. Binds DNA inside the spacer between the bidirectional transcription units comprising the yihUTS operon and the yihV gene, and upstream the csqR gene itself. The sequence is that of HTH-type transcriptional repressor CsqR from Escherichia coli (strain K12).